The chain runs to 309 residues: Serine/threonine-protein phosphatase 4 catalytic subunit (309 aa).

Positions 52, 54, 80, and 112 each coordinate Mn(2+). The active-site Proton donor is His113. Mn(2+)-binding residues include His162 and His236. The residue at position 309 (Leu309) is a Leucine methyl ester.

This sequence belongs to the PPP phosphatase family. PP-4 (PP-X) subfamily. As to quaternary structure, catalytic subunit of the histone H2A phosphatase complex (HTP-C) containing PPH3, PSY2 and PSY4. The cofactor is Mn(2+).

Its subcellular location is the cytoplasm. The protein localises to the nucleus. The enzyme catalyses O-phospho-L-seryl-[protein] + H2O = L-seryl-[protein] + phosphate. The catalysed reaction is O-phospho-L-threonyl-[protein] + H2O = L-threonyl-[protein] + phosphate. In terms of biological role, forms the histone H2A phosphatase complex in association with the regulatory subunits PSY2 and PSY4, which dephosphorylates H2AS128ph (gamma-H2A) that has been displaced from sites of DNA lesions in the double-stranded DNA break repair process. Dephosphorylation is necessary for efficient recovery from the DNA damage checkpoint. This chain is Serine/threonine-protein phosphatase 4 catalytic subunit (PPH3), found in Candida glabrata (strain ATCC 2001 / BCRC 20586 / JCM 3761 / NBRC 0622 / NRRL Y-65 / CBS 138) (Yeast).